A 328-amino-acid polypeptide reads, in one-letter code: tRNA dimethylallyltransferase (328 aa).

19–26 (GPTASGKT) contacts ATP. 21-26 (TASGKT) contributes to the substrate binding site. Interaction with substrate tRNA regions lie at residues 50 to 53 (DSAL), 174 to 178 (QRIQR), and 257 to 262 (RCVGYR).

Belongs to the IPP transferase family. Monomer. Mg(2+) serves as cofactor.

The catalysed reaction is adenosine(37) in tRNA + dimethylallyl diphosphate = N(6)-dimethylallyladenosine(37) in tRNA + diphosphate. Its function is as follows. Catalyzes the transfer of a dimethylallyl group onto the adenine at position 37 in tRNAs that read codons beginning with uridine, leading to the formation of N6-(dimethylallyl)adenosine (i(6)A). This Leptothrix cholodnii (strain ATCC 51168 / LMG 8142 / SP-6) (Leptothrix discophora (strain SP-6)) protein is tRNA dimethylallyltransferase.